Consider the following 502-residue polypeptide: Actin nucleation-promoting factor WAS (502 aa).

In terms of domain architecture, WH1 spans 39-148 (LGRKCLTLAT…ALVQEKIQKR (110 aa)). Positions 146–240 (QKRNQRQSGD…KKISKADIGA (95 aa)) are disordered. A compositionally biased stretch (polar residues) spans 201–211 (DIQNPDITSSR). At serine 221 the chain carries Phosphoserine. The CRIB domain occupies 238–251 (IGAPSGFKHVSHVG). At tyrosine 291 the chain carries Phosphotyrosine; by FYN and HCK. The tract at residues 307–502 (MRRQEPLPPP…DEDEDDEWDD (196 aa)) is disordered. 2 GRSGPLPPXP motif repeats span residues 337 to 346 (GRSGPLPPVP) and 376 to 385 (GRSGPLPPPP). The segment covering 341–419 (PLPPVPLGIA…PAPPPLPPAL (79 aa)) has biased composition (pro residues). Residues 430–447 (GRGALLDQIRQGIQLNKT) enclose the WH2 domain. Serine 483 and serine 484 each carry phosphoserine; by CK2. The span at 486-502 (EGEDQAGDEDEDDEWDD) shows a compositional bias: acidic residues.

In terms of assembly, binds the Arp2/3 complex. Interacts with CDC42, RAC, NCK, HCK, FYN, SRC kinase FGR, BTK, ABL1, PSTPIP1, WIP, and to the p85 subunit of PLC-gamma. Interacts (via C-terminus) with ALDOA. Interacts with NCK1 (via SH3 domains). Interacts with FCHSD2. (Microbial infection) Interacts with E.coli effector protein EspF(U). Phosphorylated at Tyr-291 by FYN and HCK, inducing WAS effector activity after TCR engagement. Phosphorylation at Tyr-291 enhances WAS activity in promoting actin polymerization and filopodia formation. Expressed predominantly in the thymus. Also found, to a much lesser extent, in the spleen.

The protein localises to the cytoplasm. Its subcellular location is the cytoskeleton. It is found in the nucleus. Its function is as follows. Effector protein for Rho-type GTPases that regulates actin filament reorganization via its interaction with the Arp2/3 complex. Important for efficient actin polymerization. Possible regulator of lymphocyte and platelet function. Mediates actin filament reorganization and the formation of actin pedestals upon infection by pathogenic bacteria. In addition to its role in the cytoplasmic cytoskeleton, also promotes actin polymerization in the nucleus, thereby regulating gene transcription and repair of damaged DNA. Promotes homologous recombination (HR) repair in response to DNA damage by promoting nuclear actin polymerization, leading to drive motility of double-strand breaks (DSBs). This chain is Actin nucleation-promoting factor WAS (WAS), found in Homo sapiens (Human).